A 28-amino-acid polypeptide reads, in one-letter code: Potassium channel toxin kappa-KTx 2.9 (28 aa).

2 cysteine pairs are disulfide-bonded: Cys4–Cys22 and Cys8–Cys18.

This sequence belongs to the short scorpion toxin superfamily. Potassium channel inhibitor family. Gamma-KTx 2 subfamily. Contains 2 disulfide bonds. Expressed by the venom gland.

The protein localises to the secreted. Its function is as follows. Reversibly blocks voltage-gated potassium channels Kv1.2/KCNA2 and Kv1.3/KCNA3. The sequence is that of Potassium channel toxin kappa-KTx 2.9 from Pandinus imperator (Emperor scorpion).